A 58-amino-acid chain; its full sequence is Amyloid-beta precursor protein (58 aa).

At 1–34 (ISEVKMDAEFRHDSGYEVHHQKLVFFAEDVGSNK) the chain is on the extracellular side. Cu(2+)-binding residues include histidine 12, tyrosine 16, histidine 19, and histidine 20. Residues histidine 12, tyrosine 16, histidine 19, and histidine 20 each coordinate Zn(2+). The chain crosses the membrane as a helical span at residues 35–58 (GAIIGLMVGGVVIATVIVITLVML).

This sequence belongs to the APP family. In terms of assembly, binds, via its C-terminus, to the PID domain of several cytoplasmic proteins, including APBB family members, the APBA family, MAPK8IP1, SHC1 and NUMB and DAB1. Binding to DAB1 inhibits its serine phosphorylation. Interacts (via NPXY motif) with DAB2 (via PID domain); the interaction is impaired by tyrosine phosphorylation of the NPXY motif. Also interacts with GPCR-like protein BPP, APPBP1, IB1, KNS2 (via its TPR domains), APPBP2 (via BaSS) and DDB1. In vitro, it binds MAPT via the MT-binding domains. Associates with microtubules in the presence of ATP and in a kinesin-dependent manner. Interacts, through a C-terminal domain, with GNAO1. Interacts with CPEB1, ANKS1B and AGER. Interacts with ITM2B. Interacts with ITM2C. Interacts with IDE. Can form homodimers; dimerization is enhanced in the presence of Cu(2+) ions. Can form homodimers; this is promoted by heparin binding. Interacts with SORL1 (via N-terminal ectodomain); this interaction retains APP in the trans-Golgi network and reduces processing into soluble APP-alpha and amyloid-beta peptides. Interacts with PLD3. Interacts with VDAC1. Interacts with NSG1; could regulate APP processing. Amyloid-beta protein 42 interacts with FPR2. Interacts with LRRK2. Interacts (via cytoplasmic domain) with KIF5B. Interacts (via C-terminus) with APBB2/FE65L1 (via C-terminus). Interacts (via intracellular domain) with APBB3. Proteolytically processed under normal cellular conditions. Cleavage either by alpha-secretase, beta-secretase or theta-secretase leads to generation and extracellular release of soluble APP peptides, S-APP-alpha and S-APP-beta, and the retention of corresponding membrane-anchored C-terminal fragments, C80, C83 and C99. Subsequent processing of C80 and C83 by gamma-secretase yields P3 peptides. This is the major secretory pathway and is non-amyloidogenic. Alternatively, presenilin/nicastrin-mediated gamma-secretase processing of C99 releases the amyloid-beta proteins, amyloid-beta protein 40 and amyloid-beta protein 42, major components of amyloid plaques, and the cytotoxic C-terminal fragments, gamma-CTF(50), gamma-CTF(57) and gamma-CTF(59). PSEN1 cleavage is more efficient with C83 than with C99 as substrate (in vitro). Amyloid-beta protein 40 and Amyloid-beta protein 42 are cleaved by ACE. Many other minor amyloid-beta peptides, amyloid-beta 1-X peptides, are found in cerebral spinal fluid (CSF) including the amyloid-beta X-15 peptides, produced from the cleavage by alpha-secretase.

Its subcellular location is the cell membrane. The protein resides in the membrane. The protein localises to the perikaryon. It is found in the cell projection. It localises to the growth cone. Its subcellular location is the clathrin-coated pit. The protein resides in the early endosome. The protein localises to the cytoplasmic vesicle. It is found in the secreted. It localises to the cell surface. Its subcellular location is the nucleus. The protein resides in the cytoplasm. Functions as a cell surface receptor and performs physiological functions on the surface of neurons relevant to neurite growth, neuronal adhesion and axonogenesis. Interaction between APP molecules on neighboring cells promotes synaptogenesis. Involved in cell mobility and transcription regulation through protein-protein interactions. Can promote transcription activation through binding to APBB1-KAT5 and inhibit Notch signaling through interaction with Numb. Couples to apoptosis-inducing pathways such as those mediated by G(o) and JIP. Inhibits G(o)-alpha ATPase activity. Acts as a kinesin I membrane receptor, mediating the axonal transport of beta-secretase and presenilin 1. By acting as a kinesin I membrane receptor, plays a role in axonal anterograde transport of cargo towards synapses in axons. May be involved in copper homeostasis/oxidative stress through copper ion reduction. In vitro, copper-metallated APP induces neuronal death directly or is potentiated through Cu(2+)-mediated low-density lipoprotein oxidation. Can regulate neurite outgrowth through binding to components of the extracellular matrix such as heparin and collagen I and IV. Induces a AGER-dependent pathway that involves activation of p38 MAPK, resulting in internalization of amyloid-beta peptide and mitochondrial dysfunction in cultured cortical neurons. Provides Cu(2+) ions for GPC1 which are required for release of nitric oxide (NO) and subsequent degradation of the heparan sulfate chains on GPC1. This chain is Amyloid-beta precursor protein (APP), found in Canis lupus familiaris (Dog).